The sequence spans 91 residues: Alpha-latrotoxin associated low molecular weight protein SGV150-311 (91 aa).

The N-terminal stretch at methionine 1–cysteine 18 is a signal peptide.

Belongs to the arthropod CHH/MIH/GIH/VIH hormone family. Expressed by the venom gland.

The protein localises to the secreted. In terms of biological role, may increase the toxicity of alpha-latrotoxin and/or other venom components. Is non-toxic to mice and to the cockroach Periplaneta americana. The chain is Alpha-latrotoxin associated low molecular weight protein SGV150-311 from Steatoda grossa (False black widow).